Reading from the N-terminus, the 380-residue chain is Putative glutamate--cysteine ligase 2-1 (380 aa).

The protein belongs to the glutamate--cysteine ligase type 2 family. YbdK subfamily.

It carries out the reaction L-cysteine + L-glutamate + ATP = gamma-L-glutamyl-L-cysteine + ADP + phosphate + H(+). Its function is as follows. ATP-dependent carboxylate-amine ligase which exhibits weak glutamate--cysteine ligase activity. The chain is Putative glutamate--cysteine ligase 2-1 from Mycolicibacterium vanbaalenii (strain DSM 7251 / JCM 13017 / BCRC 16820 / KCTC 9966 / NRRL B-24157 / PYR-1) (Mycobacterium vanbaalenii).